A 24-amino-acid chain; its full sequence is Brevinin-1Bb (24 aa).

A disulfide bond links C18 and C24.

In terms of tissue distribution, expressed by the skin glands.

It is found in the secreted. In terms of biological role, antibacterial activity against Gram-positive bacterium S.aureus and Gram-negative bacterium E.coli. Has activity against C.albicans. This chain is Brevinin-1Bb, found in Lithobates berlandieri (Rio Grande leopard frog).